A 148-amino-acid chain; its full sequence is Pseudoazurin (148 aa).

An N-terminal signal peptide occupies residues 1-25 (MMIFRALIAAATLAIAIATTLPAAA). One can recognise a Plastocyanin-like domain in the interval 30–118 (VKMLNSGPGG…MGMVALVVVG (89 aa)). Cu cation-binding residues include His65, Cys103, His106, and Met111.

It depends on Cu cation as a cofactor.

The protein localises to the periplasm. This chain is Pseudoazurin, found in Methylorubrum extorquens (strain ATCC 14718 / DSM 1338 / JCM 2805 / NCIMB 9133 / AM1) (Methylobacterium extorquens).